An 879-amino-acid polypeptide reads, in one-letter code: Leucine--tRNA ligase (879 aa).

The 'HIGH' region signature appears at 46–56 (PYPSGALHMGH). Positions 638 to 642 (KMSKS) match the 'KMSKS' region motif. Lysine 641 is an ATP binding site.

It belongs to the class-I aminoacyl-tRNA synthetase family.

The protein localises to the cytoplasm. The enzyme catalyses tRNA(Leu) + L-leucine + ATP = L-leucyl-tRNA(Leu) + AMP + diphosphate. In Xanthomonas campestris pv. campestris (strain 8004), this protein is Leucine--tRNA ligase.